Consider the following 288-residue polypeptide: UDP-3-O-acyl-N-acetylglucosamine deacetylase (288 aa).

Zn(2+) is bound by residues His-79, His-236, and Asp-240. His-263 serves as the catalytic Proton donor.

Belongs to the LpxC family. The cofactor is Zn(2+).

The catalysed reaction is a UDP-3-O-[(3R)-3-hydroxyacyl]-N-acetyl-alpha-D-glucosamine + H2O = a UDP-3-O-[(3R)-3-hydroxyacyl]-alpha-D-glucosamine + acetate. The protein operates within glycolipid biosynthesis; lipid IV(A) biosynthesis; lipid IV(A) from (3R)-3-hydroxytetradecanoyl-[acyl-carrier-protein] and UDP-N-acetyl-alpha-D-glucosamine: step 2/6. In terms of biological role, catalyzes the hydrolysis of UDP-3-O-myristoyl-N-acetylglucosamine to form UDP-3-O-myristoylglucosamine and acetate, the committed step in lipid A biosynthesis. The polypeptide is UDP-3-O-acyl-N-acetylglucosamine deacetylase (Rickettsia prowazekii (strain Madrid E)).